A 185-amino-acid chain; its full sequence is Protein GrpE (185 aa).

The protein belongs to the GrpE family. Homodimer.

It localises to the cytoplasm. Participates actively in the response to hyperosmotic and heat shock by preventing the aggregation of stress-denatured proteins, in association with DnaK and GrpE. It is the nucleotide exchange factor for DnaK and may function as a thermosensor. Unfolded proteins bind initially to DnaJ; upon interaction with the DnaJ-bound protein, DnaK hydrolyzes its bound ATP, resulting in the formation of a stable complex. GrpE releases ADP from DnaK; ATP binding to DnaK triggers the release of the substrate protein, thus completing the reaction cycle. Several rounds of ATP-dependent interactions between DnaJ, DnaK and GrpE are required for fully efficient folding. The protein is Protein GrpE of Methanobrevibacter smithii (strain ATCC 35061 / DSM 861 / OCM 144 / PS).